A 282-amino-acid polypeptide reads, in one-letter code: MIEQRPVSNLIGHLILILGIIIVAFPIYYTFVASSMTSTQIIRPPISLLPGDHLVENYREAIFGGVERVVGVSLERLLWNSFVVAMAIAVGKIIISFMSAFAIVFFRFPMRMFFFWMIFITLMLPVEVRILPTYKVIVDLGMIDTYAGLTLPLMASATATFLFRQFFLTIPGELVEAARIDNAGPFRFMRDILLPLSKTNIAALFVILFIYGWTQYLWPLLVTNDAKMNTIIIGLRRMVDWADASTPWNYVMVTAILAIIPPILVVVLMQRWFVKGLVETEK.

Transmembrane regions (helical) follow at residues 14–34, 86–106, 112–132, 146–168, 201–221, and 248–268; these read LILILGIIIVAFPIYYTFVAS, MAIAVGKIIISFMSAFAIVFF, MFFFWMIFITLMLPVEVRILP, YAGLTLPLMASATATFLFRQFFL, IAALFVILFIYGWTQYLWPLL, and WNYVMVTAILAIIPPILVVVL. The ABC transmembrane type-1 domain maps to 78–269; that stretch reads LWNSFVVAMA…IPPILVVVLM (192 aa).

This sequence belongs to the binding-protein-dependent transport system permease family. As to quaternary structure, the complex is composed of two ATP-binding proteins (UgpC), two transmembrane proteins (UgpA and UgpE) and a solute-binding protein (UgpB).

The protein localises to the cell inner membrane. Functionally, part of the ABC transporter complex UgpBAEC involved in sn-glycerol-3-phosphate (G3P) import. Probably responsible for the translocation of the substrate across the membrane. This is sn-glycerol-3-phosphate transport system permease protein UgpE (ugpE) from Brucella melitensis biotype 1 (strain ATCC 23456 / CCUG 17765 / NCTC 10094 / 16M).